The following is a 183-amino-acid chain: ATP synthase subunit delta, chloroplastic (183 aa).

The protein belongs to the ATPase delta chain family. In terms of assembly, F-type ATPases have 2 components, F(1) - the catalytic core - and F(0) - the membrane proton channel. F(1) has five subunits: alpha(3), beta(3), gamma(1), delta(1), epsilon(1). CF(0) has four main subunits: a(1), b(1), b'(1) and c(10-14). The alpha and beta chains form an alternating ring which encloses part of the gamma chain. F(1) is attached to F(0) by a central stalk formed by the gamma and epsilon chains, while a peripheral stalk is formed by the delta, b and b' chains.

It localises to the plastid. It is found in the chloroplast thylakoid membrane. Its function is as follows. F(1)F(0) ATP synthase produces ATP from ADP in the presence of a proton or sodium gradient. F-type ATPases consist of two structural domains, F(1) containing the extramembraneous catalytic core and F(0) containing the membrane proton channel, linked together by a central stalk and a peripheral stalk. During catalysis, ATP synthesis in the catalytic domain of F(1) is coupled via a rotary mechanism of the central stalk subunits to proton translocation. Functionally, this protein is part of the stalk that links CF(0) to CF(1). It either transmits conformational changes from CF(0) to CF(1) or is implicated in proton conduction. In Cyanidium caldarium (Red alga), this protein is ATP synthase subunit delta, chloroplastic.